A 420-amino-acid polypeptide reads, in one-letter code: Protein disulfide isomerase CRELD1 (420 aa).

The first 29 residues, Met-1–Val-29, serve as a signal peptide directing secretion. Residues Gln-30–Glu-362 lie on the Extracellular side of the membrane. The CXXC motif lies at Cys-46–Cys-49. 4 disulfides stabilise this stretch: Cys-46-Cys-49, Cys-155-Cys-169, Cys-163-Cys-181, and Cys-183-Cys-192. Positions Leu-153–Gly-193 constitute an EGF-like 1 domain. A glycan (N-linked (GlcNAc...) asparagine) is linked at Asn-205. FU repeat units follow at residues His-208–Ser-255 and Ser-268–Pro-315. The CXXC signature appears at Cys-278–Cys-281. Cystine bridges form between Cys-278–Cys-281, Cys-309–Cys-321, Cys-314–Cys-330, and Cys-332–Cys-343. The EGF-like 2; calcium-binding domain occupies Asp-305 to Val-344. Residues Leu-363–Ala-383 form a helical membrane-spanning segment. Lys-384 is a topological domain (cytoplasmic). Residues Gly-385–Leu-405 form a helical membrane-spanning segment. The Extracellular segment spans residues Ser-406–Arg-420.

Belongs to the CRELD family.

The protein localises to the membrane. It catalyses the reaction Catalyzes the rearrangement of -S-S- bonds in proteins.. Its function is as follows. Protein disulfide isomerase. Promotes the localization of acetylcholine receptors (AChRs) to the plasma membrane. The sequence is that of Protein disulfide isomerase CRELD1 (CRELD1) from Bos taurus (Bovine).